A 322-amino-acid chain; its full sequence is tRNA pseudouridine synthase B (322 aa).

Basic and acidic residues predominate over residues 1-11 (MRPPRTTELDR). Positions 1–22 (MRPPRTTELDRPMTTAASQRPR) are disordered. The Nucleophile role is filled by aspartate 65.

Belongs to the pseudouridine synthase TruB family. Type 1 subfamily.

It catalyses the reaction uridine(55) in tRNA = pseudouridine(55) in tRNA. Functionally, responsible for synthesis of pseudouridine from uracil-55 in the psi GC loop of transfer RNAs. This is tRNA pseudouridine synthase B from Burkholderia lata (strain ATCC 17760 / DSM 23089 / LMG 22485 / NCIMB 9086 / R18194 / 383).